Here is a 430-residue protein sequence, read N- to C-terminus: Serine--tRNA ligase (430 aa).

236-238 (TAE) contributes to the L-serine binding site. An ATP-binding site is contributed by 267–269 (RSE). Glu290 lines the L-serine pocket. 354-357 (EISS) contributes to the ATP binding site. Ser390 contributes to the L-serine binding site.

It belongs to the class-II aminoacyl-tRNA synthetase family. Type-1 seryl-tRNA synthetase subfamily. In terms of assembly, homodimer. The tRNA molecule binds across the dimer.

The protein localises to the cytoplasm. It catalyses the reaction tRNA(Ser) + L-serine + ATP = L-seryl-tRNA(Ser) + AMP + diphosphate + H(+). It carries out the reaction tRNA(Sec) + L-serine + ATP = L-seryl-tRNA(Sec) + AMP + diphosphate + H(+). The protein operates within aminoacyl-tRNA biosynthesis; selenocysteinyl-tRNA(Sec) biosynthesis; L-seryl-tRNA(Sec) from L-serine and tRNA(Sec): step 1/1. Catalyzes the attachment of serine to tRNA(Ser). Is also able to aminoacylate tRNA(Sec) with serine, to form the misacylated tRNA L-seryl-tRNA(Sec), which will be further converted into selenocysteinyl-tRNA(Sec). In Mannheimia succiniciproducens (strain KCTC 0769BP / MBEL55E), this protein is Serine--tRNA ligase.